Reading from the N-terminus, the 88-residue chain is HssA/B-like protein 61 (88 aa).

This sequence belongs to the hssA/B family.

The protein is HssA/B-like protein 61 (hssl61) of Dictyostelium discoideum (Social amoeba).